We begin with the raw amino-acid sequence, 115 residues long: Phosphoribosyl-ATP pyrophosphatase (115 aa).

Belongs to the PRA-PH family.

It is found in the cytoplasm. It catalyses the reaction 1-(5-phospho-beta-D-ribosyl)-ATP + H2O = 1-(5-phospho-beta-D-ribosyl)-5'-AMP + diphosphate + H(+). Its pathway is amino-acid biosynthesis; L-histidine biosynthesis; L-histidine from 5-phospho-alpha-D-ribose 1-diphosphate: step 2/9. The protein is Phosphoribosyl-ATP pyrophosphatase of Bordetella parapertussis (strain 12822 / ATCC BAA-587 / NCTC 13253).